The primary structure comprises 431 residues: MAQKIQSVKGMNDLLPVGQKDFKLTAVFWQAFEDTVNRWTRAYGYQQIRTPIVEQTGLFVRSIGEETDVVGKEMYTFSDSNDSLSLSLRPEGTASCLRAVVEHNLLYNSPQKLWYMGPMFRRERPQKGRYRQFHQVGIEALGFEGPDIDAEIIAMSADLWEKLGIREYLTLEINSLGNREERAAHRAALVEYLTRYEAQLDEDSKRRLKTNPLRVLDTKNPDLQEICNAAPRLVDYLGEASQNHYARFKAMLDGLGIQYIENSRLVRGLDYYNQTVFEWTTDKLGAQATVCGGGRYDGLIEELGGKPAPSIGFAMGIERLLLLVSEYGSLEVNAAPDVYAMHQGEGADLQVMKYAQALRAQGFNVIQHSGYQSLKAQMKKADNSGARFALIVAQDELADGTVTLKDMNGAHGQQTVSATDLTDTLQQWKNA.

It belongs to the class-II aminoacyl-tRNA synthetase family. In terms of assembly, homodimer.

The protein resides in the cytoplasm. It carries out the reaction tRNA(His) + L-histidine + ATP = L-histidyl-tRNA(His) + AMP + diphosphate + H(+). The protein is Histidine--tRNA ligase of Neisseria gonorrhoeae (strain ATCC 700825 / FA 1090).